Consider the following 300-residue polypeptide: tRNA dimethylallyltransferase (300 aa).

11–18 (GPTAVGKS) is a binding site for ATP. A substrate-binding site is contributed by 13–18 (TAVGKS). Residues 35–38 (DSIQ) are interaction with substrate tRNA.

Belongs to the IPP transferase family. In terms of assembly, monomer. Mg(2+) is required as a cofactor.

It carries out the reaction adenosine(37) in tRNA + dimethylallyl diphosphate = N(6)-dimethylallyladenosine(37) in tRNA + diphosphate. In terms of biological role, catalyzes the transfer of a dimethylallyl group onto the adenine at position 37 in tRNAs that read codons beginning with uridine, leading to the formation of N6-(dimethylallyl)adenosine (i(6)A). In Borrelia turicatae (strain 91E135), this protein is tRNA dimethylallyltransferase.